A 410-amino-acid polypeptide reads, in one-letter code: L-sorbose 1-phosphate reductase (410 aa).

Residues cysteine 40, histidine 69, and glutamate 70 each contribute to the Zn(2+) site. Residues arginine 221 and 309–310 (GT) each bind NAD(+).

Belongs to the zinc-containing alcohol dehydrogenase family. The cofactor is Zn(2+).

Reduces L-sorbose 1-phosphate to D-glucitol 6-phosphate. The protein is L-sorbose 1-phosphate reductase (sorE) of Klebsiella pneumoniae.